Reading from the N-terminus, the 88-residue chain is Small ribosomal subunit protein uS17 (88 aa).

It belongs to the universal ribosomal protein uS17 family. As to quaternary structure, part of the 30S ribosomal subunit.

In terms of biological role, one of the primary rRNA binding proteins, it binds specifically to the 5'-end of 16S ribosomal RNA. This chain is Small ribosomal subunit protein uS17, found in Dechloromonas aromatica (strain RCB).